We begin with the raw amino-acid sequence, 217 residues long: Meiotically up-regulated gene 37 protein (217 aa).

Has a role in meiosis. This is Meiotically up-regulated gene 37 protein (mug37) from Schizosaccharomyces pombe (strain 972 / ATCC 24843) (Fission yeast).